A 533-amino-acid chain; its full sequence is Calcium/calmodulin-dependent protein kinase type II subunit delta (533 aa).

Residue alanine 2 is modified to N-acetylalanine. The 259-residue stretch at 14-272 (YQLFEELGKG…ASEALKHPWI (259 aa)) folds into the Protein kinase domain. Residues 20–28 (LGKGAFSVV) and lysine 43 each bind ATP. The active-site Proton acceptor is aspartate 136. The autoinhibitory domain stretch occupies residues 283 to 292 (HRQETVDCLK). At threonine 287 the chain carries Phosphothreonine; by autocatalysis. The segment at 291-301 (LKKFNARRKLK) is calmodulin-binding. Residues threonine 306 and threonine 307 each carry the phosphothreonine; by autocatalysis modification. Serine 315 carries the phosphoserine modification. At lysine 318 the chain carries N6-acetyllysine. Phosphoserine is present on residues serine 319 and serine 364. The disordered stretch occupies residues 337–375 (TSPKENIPTPALEPQTTVIHNPDGNKESTESSNTTIEDE). Phosphothreonine is present on threonine 365. Serine 367 carries the phosphoserine modification. Threonine 370 and threonine 371 each carry phosphothreonine. Residues serine 438, serine 524, and serine 528 each carry the phosphoserine modification.

Belongs to the protein kinase superfamily. CAMK Ser/Thr protein kinase family. CaMK subfamily. In terms of assembly, CAMK2 is composed of 4 different chains: alpha (CAMK2A), beta (CAMK2B), gamma (CAMK2G), and delta (CAMK2D). The different isoforms assemble into homo- or heteromultimeric holoenzymes composed of 12 subunits with two hexameric rings stacked one on top of the other. Interacts with RRAD and CACNB2. Autophosphorylation of Thr-287 following activation by Ca(2+)/calmodulin. Phosphorylation of Thr-287 locks the kinase into an activated state. In terms of tissue distribution, expressed in liver.

It localises to the cell membrane. It is found in the sarcolemma. The protein resides in the sarcoplasmic reticulum membrane. The enzyme catalyses L-seryl-[protein] + ATP = O-phospho-L-seryl-[protein] + ADP + H(+). It carries out the reaction L-threonyl-[protein] + ATP = O-phospho-L-threonyl-[protein] + ADP + H(+). Its activity is regulated as follows. Activated by Ca(2+)/calmodulin. Binding of calmodulin results in conformational change that relieves intrasteric autoinhibition and allows autophosphorylation of Thr-287 which turns the kinase in a constitutively active form and confers to the kinase a Ca(2+)-independent activity. In terms of biological role, calcium/calmodulin-dependent protein kinase involved in the regulation of Ca(2+) homeostatis and excitation-contraction coupling (ECC) in heart by targeting ion channels, transporters and accessory proteins involved in Ca(2+) influx into the myocyte, Ca(2+) release from the sarcoplasmic reticulum (SR), SR Ca(2+) uptake and Na(+) and K(+) channel transport. Targets also transcription factors and signaling molecules to regulate heart function. In its activated form, is involved in the pathogenesis of dilated cardiomyopathy and heart failure. Contributes to cardiac decompensation and heart failure by regulating SR Ca(2+) release via direct phosphorylation of RYR2 Ca(2+) channel on 'Ser-2808'. In the nucleus, phosphorylates the MEF2 repressor HDAC4, promoting its nuclear export and binding to 14-3-3 protein, and expression of MEF2 and genes involved in the hypertrophic program. Is essential for left ventricular remodeling responses to myocardial infarction. In pathological myocardial remodeling acts downstream of the beta adrenergic receptor signaling cascade to regulate key proteins involved in ECC. Regulates Ca(2+) influx to myocytes by binding and phosphorylating the L-type Ca(2+) channel subunit beta-2 CACNB2. In addition to Ca(2+) channels, can target and regulate the cardiac sarcolemmal Na(+) channel Nav1.5/SCN5A and the K+ channel Kv4.3/KCND3, which contribute to arrhythmogenesis in heart failure. Phosphorylates phospholamban (PLN/PLB), an endogenous inhibitor of SERCA2A/ATP2A2, contributing to the enhancement of SR Ca(2+) uptake that may be important in frequency-dependent acceleration of relaxation (FDAR) and maintenance of contractile function during acidosis. May participate in the modulation of skeletal muscle function in response to exercise, by regulating SR Ca(2+) transport through phosphorylation of PLN/PLB and triadin, a ryanodine receptor-coupling factor. In response to interferon-gamma (IFN-gamma) stimulation, catalyzes phosphorylation of STAT1, stimulating the JAK-STAT signaling pathway. In Oryctolagus cuniculus (Rabbit), this protein is Calcium/calmodulin-dependent protein kinase type II subunit delta (CAMK2D).